The sequence spans 87 residues: Small ribosomal subunit protein bS20 (87 aa).

Belongs to the bacterial ribosomal protein bS20 family.

In terms of biological role, binds directly to 16S ribosomal RNA. The protein is Small ribosomal subunit protein bS20 of Beijerinckia indica subsp. indica (strain ATCC 9039 / DSM 1715 / NCIMB 8712).